A 153-amino-acid polypeptide reads, in one-letter code: Aspartate carbamoyltransferase regulatory chain (153 aa).

Positions 109, 114, 138, and 141 each coordinate Zn(2+).

Belongs to the PyrI family. Contains catalytic and regulatory chains. Zn(2+) serves as cofactor.

Its function is as follows. Involved in allosteric regulation of aspartate carbamoyltransferase. This is Aspartate carbamoyltransferase regulatory chain from Escherichia coli (strain ATCC 8739 / DSM 1576 / NBRC 3972 / NCIMB 8545 / WDCM 00012 / Crooks).